The chain runs to 249 residues: Type III pantothenate kinase (249 aa).

6-13 provides a ligand contact to ATP; that stretch reads DCGNSFIK. Residues Tyr93 and 100 to 103 each bind substrate; that span reads GMDR. Catalysis depends on Asp102, which acts as the Proton acceptor. Residue Asp122 participates in K(+) binding. Thr125 is an ATP binding site. Position 181 (Thr181) interacts with substrate.

Belongs to the type III pantothenate kinase family. Homodimer. NH4(+) serves as cofactor. The cofactor is K(+).

Its subcellular location is the cytoplasm. The catalysed reaction is (R)-pantothenate + ATP = (R)-4'-phosphopantothenate + ADP + H(+). Its pathway is cofactor biosynthesis; coenzyme A biosynthesis; CoA from (R)-pantothenate: step 1/5. Functionally, catalyzes the phosphorylation of pantothenate (Pan), the first step in CoA biosynthesis. The sequence is that of Type III pantothenate kinase from Pseudomonas putida (strain ATCC 700007 / DSM 6899 / JCM 31910 / BCRC 17059 / LMG 24140 / F1).